A 141-amino-acid polypeptide reads, in one-letter code: 3-hydroxyacyl-[acyl-carrier-protein] dehydratase FabZ (141 aa).

His48 is an active-site residue.

Belongs to the thioester dehydratase family. FabZ subfamily.

It is found in the cytoplasm. The enzyme catalyses a (3R)-hydroxyacyl-[ACP] = a (2E)-enoyl-[ACP] + H2O. In terms of biological role, involved in unsaturated fatty acids biosynthesis. Catalyzes the dehydration of short chain beta-hydroxyacyl-ACPs and long chain saturated and unsaturated beta-hydroxyacyl-ACPs. In Streptococcus thermophilus (strain CNRZ 1066), this protein is 3-hydroxyacyl-[acyl-carrier-protein] dehydratase FabZ.